The chain runs to 685 residues: DNA topoisomerase 4 subunit B (685 aa).

Positions 389–400 are enriched in basic and acidic residues; sequence EAARKAREESRN. A disordered region spans residues 389–427; that stretch reads EAARKAREESRNGKKRKKGESLLSGKLTPAQSRNPKKNE. The 115-residue stretch at 426–540 folds into the Toprim domain; the sequence is NELYLVEGDS…AGKVYIALPP (115 aa). Mg(2+) is bound by residues E432, D505, and D507. 2 stretches are compositionally biased toward acidic residues: residues 644–654 and 673–685; these read GSILDRSEEDT and QTDD…FDIE. The interval 644 to 685 is disordered; the sequence is GSILDRSEEDTSAPTGESLLDAEKTKEAEQTDDTEISLFDIE.

The protein belongs to the type II topoisomerase family. ParE type 1 subfamily. In terms of assembly, heterotetramer composed of ParC and ParE. It depends on Mg(2+) as a cofactor. The cofactor is Mn(2+). Ca(2+) is required as a cofactor.

The catalysed reaction is ATP-dependent breakage, passage and rejoining of double-stranded DNA.. With respect to regulation, pyrrolopyrimidines inhibit both GyrB and its paralog in topoisomerase IV (parE). Topoisomerase IV is essential for chromosome segregation. It relaxes supercoiled DNA. Performs the decatenation events required during the replication of a circular DNA molecule. In Enterococcus faecalis (strain ATCC 700802 / V583), this protein is DNA topoisomerase 4 subunit B.